A 705-amino-acid polypeptide reads, in one-letter code: Ribosomal RNA large subunit methyltransferase K/L (705 aa).

The region spanning 43 to 154 (VVYRCCLWSR…GEKGILGFDL (112 aa)) is the THUMP domain.

Belongs to the methyltransferase superfamily. RlmKL family.

It localises to the cytoplasm. It carries out the reaction guanosine(2445) in 23S rRNA + S-adenosyl-L-methionine = N(2)-methylguanosine(2445) in 23S rRNA + S-adenosyl-L-homocysteine + H(+). The catalysed reaction is guanosine(2069) in 23S rRNA + S-adenosyl-L-methionine = N(2)-methylguanosine(2069) in 23S rRNA + S-adenosyl-L-homocysteine + H(+). In terms of biological role, specifically methylates the guanine in position 2445 (m2G2445) and the guanine in position 2069 (m7G2069) of 23S rRNA. The polypeptide is Ribosomal RNA large subunit methyltransferase K/L (Aliivibrio fischeri (strain ATCC 700601 / ES114) (Vibrio fischeri)).